A 397-amino-acid chain; its full sequence is Elongation factor Tu (397 aa).

The region spanning 10 to 207 (KPHVNVGTIG…TLDTYIPEPV (198 aa)) is the tr-type G domain. The tract at residues 19–26 (GHVDHGKT) is G1. A GTP-binding site is contributed by 19–26 (GHVDHGKT). T26 contacts Mg(2+). Positions 60–64 (GITIN) are G2. Residues 81 to 84 (DCPG) are G3. GTP contacts are provided by residues 81-85 (DCPGH) and 136-139 (NKAD). A G4 region spans residues 136 to 139 (NKAD). The G5 stretch occupies residues 174–176 (SAL).

The protein belongs to the TRAFAC class translation factor GTPase superfamily. Classic translation factor GTPase family. EF-Tu/EF-1A subfamily. As to quaternary structure, monomer.

The protein localises to the cytoplasm. The enzyme catalyses GTP + H2O = GDP + phosphate + H(+). Functionally, GTP hydrolase that promotes the GTP-dependent binding of aminoacyl-tRNA to the A-site of ribosomes during protein biosynthesis. The protein is Elongation factor Tu of Ectopseudomonas mendocina (strain ymp) (Pseudomonas mendocina).